Consider the following 224-residue polypeptide: Small ribosomal subunit protein uS3 (224 aa).

The KH type-2 domain occupies 39-107 (IREFLKKKPS…DVWVEIAEVK (69 aa)).

Belongs to the universal ribosomal protein uS3 family. Part of the 30S ribosomal subunit. Forms a tight complex with proteins S10 and S14.

Its function is as follows. Binds the lower part of the 30S subunit head. Binds mRNA in the 70S ribosome, positioning it for translation. This chain is Small ribosomal subunit protein uS3, found in Chlamydia trachomatis serovar L2 (strain ATCC VR-902B / DSM 19102 / 434/Bu).